A 159-amino-acid polypeptide reads, in one-letter code: MSGEGSPTITIEPGSAHGLRVAIVVSEWNRDITDELASQAQQAGETAGAEVTVIPVVGALEIPVVVKKATQTYDAVVALGCVIQGGTPHFDHVCNAVTYGLTKIAVETETPVGNGVLTCNTHEQAVDRAGGPTAHENKGAEAMIAAIHTAQTLKSMAAD.

5-amino-6-(D-ribitylamino)uracil contacts are provided by residues Trp28, 59–61 (ALE), and 81–83 (CVI). Residue 86–87 (GT) participates in (2S)-2-hydroxy-3-oxobutyl phosphate binding. The active-site Proton donor is the His89. Asn114 serves as a coordination point for 5-amino-6-(D-ribitylamino)uracil. (2S)-2-hydroxy-3-oxobutyl phosphate is bound at residue Arg128.

It belongs to the DMRL synthase family.

The enzyme catalyses (2S)-2-hydroxy-3-oxobutyl phosphate + 5-amino-6-(D-ribitylamino)uracil = 6,7-dimethyl-8-(1-D-ribityl)lumazine + phosphate + 2 H2O + H(+). The protein operates within cofactor biosynthesis; riboflavin biosynthesis; riboflavin from 2-hydroxy-3-oxobutyl phosphate and 5-amino-6-(D-ribitylamino)uracil: step 1/2. Catalyzes the formation of 6,7-dimethyl-8-ribityllumazine by condensation of 5-amino-6-(D-ribitylamino)uracil with 3,4-dihydroxy-2-butanone 4-phosphate. This is the penultimate step in the biosynthesis of riboflavin. This is 6,7-dimethyl-8-ribityllumazine synthase from Corynebacterium kroppenstedtii (strain DSM 44385 / JCM 11950 / CIP 105744 / CCUG 35717).